The primary structure comprises 101 residues: Cilia- and flagella-associated protein 141 (101 aa).

As to quaternary structure, microtubule inner protein component of sperm flagellar doublet microtubules.

The protein localises to the cytoplasm. It localises to the cytoskeleton. Its subcellular location is the cilium axoneme. It is found in the flagellum axoneme. Functionally, microtubule inner protein (MIP) part of the dynein-decorated doublet microtubules (DMTs) in cilia axoneme, which is required for motile cilia beating. This is Cilia- and flagella-associated protein 141 from Mus musculus (Mouse).